A 210-amino-acid polypeptide reads, in one-letter code: Frataxin, mitochondrial (210 aa).

The N-terminal 41 residues, 1–41, are a transit peptide targeting the mitochondrion; it reads MWTLGRRAVAGLLASPSPAQAQTLTRVPRPAELAPLCGRRG.

It belongs to the frataxin family. As to quaternary structure, component of the mitochondrial core iron-sulfur cluster (ISC) complex composed of NFS1, LYRM4, NDUFAB1, ISCU, FXN, and FDX2; this complex is a heterohexamer containing two copies of each monomer. Homodimer. Monomer (probable predominant form). Oligomer. Monomers and polymeric aggregates of &gt;1 MDa have been isolated from mitochondria. A small fraction of heterologous overexpressed recombinant frataxin forms high-molecular weight aggregates that incorporate iron. Interacts with LYRM4. Interacts (via ferrous form) with ISCU; the interaction is possible when both are bound to the dimeric form of the cysteine desulfurase complex (NFS1:LYRM4) and the interaction enhances FXN interaction to the dimeric form of the cysteine desulfurase complex (NFS1:LYRM4). Interacts with FECH; one iron-bound FXN monomer seems to interact with a FECH homodimer. Interacts with SDHA and SDHB. Interacts with ACO2; the interaction is dependent on citrate. Interacts with HSPA9. In terms of assembly, interacts with ACO1. Interacts with ISCU (cytoplasmic form). Processed in two steps by mitochondrial processing peptidase (MPP). MPP first cleaves the precursor to intermediate form and subsequently converts the intermediate to yield frataxin mature form (frataxin(81-210)) which is the predominant form. The additional forms, frataxin(56-210) and frataxin(78-210), seem to be produced when the normal maturation process is impaired; their physiological relevance is unsure. Expressed in the heart, peripheral blood lymphocytes and dermal fibroblasts.

It is found in the mitochondrion. The protein resides in the cytoplasm. Its subcellular location is the cytosol. It catalyses the reaction 4 Fe(2+) + O2 + 4 H(+) = 4 Fe(3+) + 2 H2O. Functions as an activator of persulfide transfer to the scaffoding protein ISCU as component of the core iron-sulfur cluster (ISC) assembly complex and participates to the [2Fe-2S] cluster assembly. Accelerates sulfur transfer from NFS1 persulfide intermediate to ISCU and to small thiols such as L-cysteine and glutathione leading to persulfuration of these thiols and ultimately sulfide release. Binds ferrous ion and is released from FXN upon the addition of both L-cysteine and reduced FDX2 during [2Fe-2S] cluster assembly. The core iron-sulfur cluster (ISC) assembly complex is involved in the de novo synthesis of a [2Fe-2S] cluster, the first step of the mitochondrial iron-sulfur protein biogenesis. This process is initiated by the cysteine desulfurase complex (NFS1:LYRM4:NDUFAB1) that produces persulfide which is delivered on the scaffold protein ISCU in a FXN-dependent manner. Then this complex is stabilized by FDX2 which provides reducing equivalents to accomplish the [2Fe-2S] cluster assembly. Finally, the [2Fe-2S] cluster is transferred from ISCU to chaperone proteins, including HSCB, HSPA9 and GLRX5. May play a role in the protection against iron-catalyzed oxidative stress through its ability to catalyze the oxidation of Fe(2+) to Fe(3+); the oligomeric form but not the monomeric form has in vitro ferroxidase activity. May be able to store large amounts of iron in the form of a ferrihydrite mineral by oligomerization; however, the physiological relevance is unsure as reports are conflicting and the function has only been shown using heterologous overexpression systems. May function as an iron chaperone protein that protects the aconitase [4Fe-4S]2+ cluster from disassembly and promotes enzyme reactivation. May play a role as a high affinity iron binding partner for FECH that is capable of both delivering iron to ferrochelatase and mediating the terminal step in mitochondrial heme biosynthesis. Its function is as follows. Modulates the RNA-binding activity of ACO1. May be involved in the cytoplasmic iron-sulfur protein biogenesis. May contribute to oxidative stress resistance and overall cell survival. The chain is Frataxin, mitochondrial from Homo sapiens (Human).